The following is a 403-amino-acid chain: TBC1 domain family member 20 (403 aa).

Residues 1-25 are disordered; the sequence is MALRSAQGDGPTSGHWDGGAEKADF. Residues 60–246 enclose the Rab-GAP TBC domain; the sequence is LLTDEIRRKV…RLYDFFLACH (187 aa). 2 helical membrane-spanning segments follow: residues 238-258 and 367-387; these read LYDFFLACHPLMPIYFAAVIV and FVKLAVMGLTVALGAAALAVV.

In terms of assembly, (Microbial infection) Directly interacts with the N-terminal amphipathic helix of hepatitis C virus (HCV) NS5A.

It localises to the membrane. Its function is as follows. GTPase-activating protein (GAP) specific for Rab1 and Rab2 small GTPase families for which it can accelerate the intrinsic GTP hydrolysis rate by more than five orders of magnitude. Also shows GAP activity for RAB18 GTPase. Promotes RAB18 dissociation from the endoplasmic reticulum (ER) membrane into the cytosol, probably through stimulating RAB18 GTP-hydrolysis. Involved in maintaining endoplasmic reticulum structure. The chain is TBC1 domain family member 20 from Homo sapiens (Human).